The primary structure comprises 149 residues: Calmodulin (149 aa).

At Ala-2 the chain carries N-acetylalanine. EF-hand domains lie at 8 to 43 (EQIA…LGQN), 44 to 79 (PTEA…KMKD), 81 to 116 (DSEE…LGEK), and 117 to 149 (LTDE…MMAK). Positions 21, 23, 25, 27, 32, 57, 59, 61, 63, 68, 94, 96, 98, and 105 each coordinate Ca(2+). Lys-116 is modified (N6,N6,N6-trimethyllysine). Ca(2+) is bound by residues Asp-130, Asp-132, Asp-134, Gln-136, and Glu-141.

The protein belongs to the calmodulin family. The N-terminus is blocked.

Calmodulin mediates the control of a large number of enzymes, ion channels and other proteins by Ca(2+). Among the enzymes to be stimulated by the calmodulin-Ca(2+) complex are a number of protein kinases and phosphatases. In Spinacia oleracea (Spinach), this protein is Calmodulin.